The sequence spans 462 residues: MTKELLRALPKIDEILGIFNEDFLNENGRETIVSALRDIINENRKAILNEEVDYALTKEEAKSKCEHRLLKKRERNLKRVINGTGVVIHTNLGRSLLSKEATEAVALAASSYSNLEYDLEKGERGSRYSLIEGIIKDITGAEAALVVNNNAAAIMLVLNSLCENKEVIVSRGELVEIGGSFRIPEVMNFSRAKLVEVGTTNRTHLYDYEDAITEETGAFLKVHSSNFKIVGFTKSVSANDICNLAKEKGIPVIEDIGSGVLIDLSKYGLEKEPTVIESLESGVDIVTFSGDKMLGGAQAGIIVGKKKFIDKIKKNQLTRALRVDKFTLAALEITLKHYLNEKEAIEKIPTLYMMTLDLNEIKERANRLYKNLEGLNKFYKFSIEEGESTVGGGSMPDSKLSTYLLRIDSDRINEVNLERELREYKIPIITRVYKGAVYIDLRTILEDDYEVIFNALKEIGEK.

The residue at position 292 (K292) is an N6-(pyridoxal phosphate)lysine.

The protein belongs to the SelA family. Pyridoxal 5'-phosphate is required as a cofactor.

The protein resides in the cytoplasm. It catalyses the reaction L-seryl-tRNA(Sec) + selenophosphate + H(+) = L-selenocysteinyl-tRNA(Sec) + phosphate. The protein operates within aminoacyl-tRNA biosynthesis; selenocysteinyl-tRNA(Sec) biosynthesis; selenocysteinyl-tRNA(Sec) from L-seryl-tRNA(Sec) (bacterial route): step 1/1. Converts seryl-tRNA(Sec) to selenocysteinyl-tRNA(Sec) required for selenoprotein biosynthesis. The sequence is that of L-seryl-tRNA(Sec) selenium transferase from Clostridium perfringens (strain 13 / Type A).